A 117-amino-acid chain; its full sequence is Big defensin (117 aa).

The N-terminal stretch at M1–A23 is a signal peptide. The propeptide occupies V24–E33. 3 disulfide bridges follow: C82-C112, C89-C107, and C93-C113.

It belongs to the big defensin family.

It is found in the secreted. Significantly inhibits the growth of Gram-negative and Gram-positive bacteria and fungi in vitro. The chain is Big defensin from Branchiostoma belcheri (Amphioxus).